The primary structure comprises 107 residues: Large ribosomal subunit protein uL24 (107 aa).

Belongs to the universal ribosomal protein uL24 family. Part of the 50S ribosomal subunit.

Its function is as follows. One of two assembly initiator proteins, it binds directly to the 5'-end of the 23S rRNA, where it nucleates assembly of the 50S subunit. In terms of biological role, one of the proteins that surrounds the polypeptide exit tunnel on the outside of the subunit. This is Large ribosomal subunit protein uL24 from Nitratidesulfovibrio vulgaris (strain ATCC 29579 / DSM 644 / CCUG 34227 / NCIMB 8303 / VKM B-1760 / Hildenborough) (Desulfovibrio vulgaris).